We begin with the raw amino-acid sequence, 508 residues long: Photosystem II CP47 reaction center protein (508 aa).

A run of 6 helical transmembrane segments spans residues 21–36 (SVHIMHTALVAGWAGS), 101–115 (IVFSGLCFLAAIWHW), 140–156 (GIHLFLSGVACFGFGAF), 203–218 (IAAGTLGILAGLFHLS), 237–252 (VLSSSIAAVFFAAFVV), and 457–472 (SFALLFFFGHIWHGAR).

The protein belongs to the PsbB/PsbC family. PsbB subfamily. PSII is composed of 1 copy each of membrane proteins PsbA, PsbB, PsbC, PsbD, PsbE, PsbF, PsbH, PsbI, PsbJ, PsbK, PsbL, PsbM, PsbT, PsbX, PsbY, PsbZ, Psb30/Ycf12, at least 3 peripheral proteins of the oxygen-evolving complex and a large number of cofactors. It forms dimeric complexes. The cofactor is Binds multiple chlorophylls. PSII binds additional chlorophylls, carotenoids and specific lipids..

The protein localises to the plastid. It localises to the chloroplast thylakoid membrane. One of the components of the core complex of photosystem II (PSII). It binds chlorophyll and helps catalyze the primary light-induced photochemical processes of PSII. PSII is a light-driven water:plastoquinone oxidoreductase, using light energy to abstract electrons from H(2)O, generating O(2) and a proton gradient subsequently used for ATP formation. The polypeptide is Photosystem II CP47 reaction center protein (Barbarea verna (Land cress)).